The sequence spans 147 residues: Large ribosomal subunit protein uL13 (147 aa).

The protein belongs to the universal ribosomal protein uL13 family. In terms of assembly, part of the 50S ribosomal subunit.

This protein is one of the early assembly proteins of the 50S ribosomal subunit, although it is not seen to bind rRNA by itself. It is important during the early stages of 50S assembly. This Latilactobacillus sakei subsp. sakei (strain 23K) (Lactobacillus sakei subsp. sakei) protein is Large ribosomal subunit protein uL13.